A 550-amino-acid polypeptide reads, in one-letter code: Beta-fructofuranosidase, insoluble isoenzyme CWINV6 (550 aa).

Residues 28 to 31 (WLND), glutamine 47, 92 to 93 (WS), 157 to 158 (RD), and glutamate 214 each bind substrate. Aspartate 31 is an active-site residue. Asparagine 235 and asparagine 272 each carry an N-linked (GlcNAc...) asparagine glycan.

Belongs to the glycosyl hydrolase 32 family. Expressed in seedlings and leaves, and, to a lower extent, in flowers and seeds.

The protein resides in the secreted. It is found in the extracellular space. It localises to the apoplast. The protein localises to the cell wall. It catalyses the reaction Hydrolysis of terminal, non-reducing (2-&gt;1)- and (2-&gt;6)-linked beta-D-fructofuranose residues in fructans.. Its function is as follows. 6 and 1-fructan exohydrolase that can degrade both inulin and levan-type fructans, such as phlein, levan, neokestose, levanbiose, 6-kestose, 1-kestose, inulin, and 1,1-nystose. This is Beta-fructofuranosidase, insoluble isoenzyme CWINV6 (CWINV6) from Arabidopsis thaliana (Mouse-ear cress).